Reading from the N-terminus, the 309-residue chain is Tumor necrosis factor ligand superfamily member 9 (309 aa).

Residues 1–16 (MDQHTLDVEDTADARH) are compositionally biased toward basic and acidic residues. The interval 1-20 (MDQHTLDVEDTADARHPAGT) is disordered. Over 1-82 (MDQHTLDVED…ALNFCSRHPK (82 aa)) the chain is Cytoplasmic. A helical; Signal-anchor for type II membrane protein membrane pass occupies residues 83 to 103 (LYGLVALVLLLLIAACVPIFT). Residues 104 to 309 (RTEPRPALTI…FLVKPDNPWE (206 aa)) lie on the Extracellular side of the membrane. N-linked (GlcNAc...) asparagine glycosylation is found at Asn139, Asn161, and Asn293. The THD domain maps to 147-302 (VFAKLLAKNQ…NTTSFGLFLV (156 aa)).

This sequence belongs to the tumor necrosis factor family. Homotrimer.

The protein resides in the membrane. Its function is as follows. Cytokine that binds to TNFRSF9. Induces the proliferation of activated peripheral blood T-cells. May have a role in activation-induced cell death (AICD). May play a role in cognate interactions between T-cells and B-cells/macrophages. This Mus musculus (Mouse) protein is Tumor necrosis factor ligand superfamily member 9 (Tnfsf9).